Reading from the N-terminus, the 347-residue chain is Circulating cathodic antigen (347 aa).

A coiled-coil region spans residues 76–109 (ICLAAENKQLEQLKIENKTLRNSLDEHQTALDMI). The disordered stretch occupies residues 149–177 (PGPKSVNTPSTNSIDSQSVSQKSNSGKVD). Residues 153-174 (SVNTPSTNSIDSQSVSQKSNSG) show a composition bias toward polar residues. The stretch at 206–233 (DAYATELEEELHRLRSENAGLREILMIS) forms a coiled coil. The disordered stretch occupies residues 303 to 332 (LYNIPNPSDDSSNSGTISGNHSDEDSDEDD). Positions 307–316 (PNPSDDSSNS) are enriched in low complexity.

It belongs to the SIKE family. O-glycosylated.

Involved in protection of the schistosome gut. The polypeptide is Circulating cathodic antigen (Schistosoma mansoni (Blood fluke)).